The sequence spans 142 residues: Putative pre-16S rRNA nuclease (142 aa).

This sequence belongs to the YqgF nuclease family.

It localises to the cytoplasm. In terms of biological role, could be a nuclease involved in processing of the 5'-end of pre-16S rRNA. This chain is Putative pre-16S rRNA nuclease, found in Ruminiclostridium cellulolyticum (strain ATCC 35319 / DSM 5812 / JCM 6584 / H10) (Clostridium cellulolyticum).